Consider the following 408-residue polypeptide: UPF0754 membrane protein Tery_3973 (408 aa).

Helical transmembrane passes span 4-24 (IWLYFVPPIAGGIIGYFTNDI) and 385-405 (IVNLGGVLGVVVGSFQTILLV).

This sequence belongs to the UPF0754 family.

It localises to the cell inner membrane. This is UPF0754 membrane protein Tery_3973 from Trichodesmium erythraeum (strain IMS101).